Consider the following 133-residue polypeptide: NADPH-dependent 7-cyano-7-deazaguanine reductase (133 aa).

The Thioimide intermediate role is filled by Cys-46. The Proton donor role is filled by Asp-53. Substrate-binding positions include 68-70 and 87-88; these read VEL and HE.

The protein belongs to the GTP cyclohydrolase I family. QueF type 1 subfamily.

It is found in the cytoplasm. It catalyses the reaction 7-aminomethyl-7-carbaguanine + 2 NADP(+) = 7-cyano-7-deazaguanine + 2 NADPH + 3 H(+). It functions in the pathway tRNA modification; tRNA-queuosine biosynthesis. In terms of biological role, catalyzes the NADPH-dependent reduction of 7-cyano-7-deazaguanine (preQ0) to 7-aminomethyl-7-deazaguanine (preQ1). This chain is NADPH-dependent 7-cyano-7-deazaguanine reductase, found in Parasynechococcus marenigrum (strain WH8102).